A 207-amino-acid chain; its full sequence is Small ribosomal subunit protein uS3 (207 aa).

The KH type-2 domain occupies 17-86 (IDEYLEKELR…NPQIEVEEIK (70 aa)).

Belongs to the universal ribosomal protein uS3 family. As to quaternary structure, part of the 30S ribosomal subunit.

Its function is as follows. Binds the lower part of the 30S subunit head. The polypeptide is Small ribosomal subunit protein uS3 (Thermococcus sibiricus (strain DSM 12597 / MM 739)).